Here is a 181-residue protein sequence, read N- to C-terminus: Protein canopy homolog 1 (181 aa).

The signal sequence occupies residues 1 to 21 (MAILLHFGVLITAFLSSHVEG). One can recognise a Saposin B-type domain in the interval 25–177 (PILYCGACRA…EETGLCKEYL (153 aa)). Intrachain disulfides connect C29–C173, C32–C166, and C87–C139. The short motif at 178-181 (HNEL) is the Prevents secretion from ER element.

It belongs to the canopy family.

The protein localises to the endoplasmic reticulum. Its function is as follows. Plays an role in early embryonic development. This Xenopus laevis (African clawed frog) protein is Protein canopy homolog 1 (cnpy1).